The following is a 505-amino-acid chain: Maturase K (505 aa).

This sequence belongs to the intron maturase 2 family. MatK subfamily.

The protein localises to the plastid. The protein resides in the chloroplast. Functionally, usually encoded in the trnK tRNA gene intron. Probably assists in splicing its own and other chloroplast group II introns. In Nuphar variegata (Yellow pond lily), this protein is Maturase K.